Here is a 309-residue protein sequence, read N- to C-terminus: Porphobilinogen deaminase (309 aa).

Residue cysteine 234 is modified to S-(dipyrrolylmethanemethyl)cysteine.

Belongs to the HMBS family. As to quaternary structure, monomer. Dipyrromethane is required as a cofactor.

It carries out the reaction 4 porphobilinogen + H2O = hydroxymethylbilane + 4 NH4(+). The protein operates within porphyrin-containing compound metabolism; protoporphyrin-IX biosynthesis; coproporphyrinogen-III from 5-aminolevulinate: step 2/4. Tetrapolymerization of the monopyrrole PBG into the hydroxymethylbilane pre-uroporphyrinogen in several discrete steps. The polypeptide is Porphobilinogen deaminase (hemC) (Mycobacterium bovis (strain ATCC BAA-935 / AF2122/97)).